Here is a 465-residue protein sequence, read N- to C-terminus: Hexokinase-4 (465 aa).

One can recognise a Hexokinase domain in the interval 10–454 (ATKKEKVEQI…SGRGAALVSA (445 aa)). Residues 67–203 (EGSEVGDFLS…DFEMDVVAMV (137 aa)) are hexokinase small subdomain. An ATP-binding site is contributed by 78 to 83 (DLGGTN). Substrate contacts are provided by residues 151 to 152 (SF), 168 to 169 (TK), and 204 to 205 (ND). The segment at 204 to 443 (NDTVATMISC…CEITFIESEE (240 aa)) is hexokinase large subdomain. Threonine 228 serves as a coordination point for ATP. Positions 231, 256, and 290 each coordinate substrate. Residues 295 to 296 (GK), 332 to 336 (TRFVS), and 411 to 415 (SVYKL) contribute to the ATP site.

It belongs to the hexokinase family. Monomer. Interacts with MIDN; the interaction occurs preferentially at low glucose levels and results in inhibition of hexokinase activity. Interacts with GCKR; leading to sequestration in the nucleus.

The protein resides in the cytoplasm. It localises to the nucleus. It is found in the mitochondrion. It catalyses the reaction a D-hexose + ATP = a D-hexose 6-phosphate + ADP + H(+). The catalysed reaction is D-fructose + ATP = D-fructose 6-phosphate + ADP + H(+). The enzyme catalyses D-glucose + ATP = D-glucose 6-phosphate + ADP + H(+). It carries out the reaction D-mannose + ATP = D-mannose 6-phosphate + ADP + H(+). The protein operates within carbohydrate metabolism; hexose metabolism. Its pathway is carbohydrate degradation; glycolysis; D-glyceraldehyde 3-phosphate and glycerone phosphate from D-glucose: step 1/4. With respect to regulation, subject to allosteric regulation. Low glucose and high fructose-6-phosphate triggers association with the inhibitor GCKR followed by sequestration in the nucleus. Functionally, catalyzes the phosphorylation of hexose, such as D-glucose, D-fructose and D-mannose, to hexose 6-phosphate (D-glucose 6-phosphate, D-fructose 6-phosphate and D-mannose 6-phosphate, respectively). Compared to other hexokinases, has a weak affinity for D-glucose, and is effective only when glucose is abundant. Mainly expressed in pancreatic beta cells and the liver and constitutes a rate-limiting step in glucose metabolism in these tissues. Since insulin secretion parallels glucose metabolism and the low glucose affinity of GCK ensures that it can change its enzymatic activity within the physiological range of glucose concentrations, GCK acts as a glucose sensor in the pancreatic beta cell. In pancreas, plays an important role in modulating insulin secretion. In liver, helps to facilitate the uptake and conversion of glucose by acting as an insulin-sensitive determinant of hepatic glucose usage. Required to provide D-glucose 6-phosphate for the synthesis of glycogen. Mediates the initial step of glycolysis by catalyzing phosphorylation of D-glucose to D-glucose 6-phosphate. This Mus musculus (Mouse) protein is Hexokinase-4.